The sequence spans 1477 residues: Alpha-1-inhibitor 3 (1477 aa).

Positions 1–24 (MKKDREAQLCLFSALLAFLPFASL) are cleaved as a signal peptide. Residues Cys48 and Cys86 are joined by a disulfide bond. N-linked (GlcNAc...) asparagine glycosylation is found at Asn55 and Asn247. 2 disulfides stabilise this stretch: Cys251–Cys295 and Cys269–Cys283. 4 N-linked (GlcNAc...) asparagine glycosylation sites follow: Asn301, Asn321, Asn393, and Asn508. Cystine bridges form between Cys468-Cys563, Cys595-Cys774, and Cys643-Cys678. The segment at 601 to 750 (DQSVLLQKPE…TWIWDLVTVN (150 aa)) is bait region (approximate). N-linked (GlcNAc...) asparagine glycosylation is found at Asn750, Asn777, and Asn872. 4 cysteine pairs are disulfide-bonded: Cys850–Cys886, Cys924–Cys1324, Cys1082–Cys1130, and Cys1355–Cys1470. Residues 975-978 (CGEQ) constitute a cross-link (isoglutamyl cysteine thioester (Cys-Gln)). Asn994 carries an N-linked (GlcNAc...) asparagine glycan. 3 N-linked (GlcNAc...) asparagine glycosylation sites follow: Asn1143, Asn1314, and Asn1427.

Belongs to the protease inhibitor I39 (alpha-2-macroglobulin) family. Monomer.

The protein resides in the secreted. Functionally, protease inhibitor with a wide spectrum of protein targets, which attaches through its thioester function. The polypeptide is Alpha-1-inhibitor 3 (A1i3) (Rattus norvegicus (Rat)).